The following is a 207-amino-acid chain: Superoxide dismutase [Mn] (207 aa).

H28, H76, D160, and H164 together coordinate Mn(2+).

It belongs to the iron/manganese superoxide dismutase family. The cofactor is Mn(2+).

It catalyses the reaction 2 superoxide + 2 H(+) = H2O2 + O2. Destroys superoxide anion radicals which are normally produced within the cells and which are toxic to biological systems. The chain is Superoxide dismutase [Mn] (sodA) from Mycobacterium leprae (strain TN).